The primary structure comprises 167 residues: Small ribosomal subunit protein uS3m (167 aa).

The N-terminal 35 residues, 1–35, are a transit peptide targeting the mitochondrion; it reads MVALYCGGGLRPLMLSWSRDLPCIWRALHTSAVCF.

This sequence belongs to the universal ribosomal protein uS3 family. As to quaternary structure, component of the mitochondrial ribosome small subunit (28S) which comprises a 12S rRNA and about 30 distinct proteins.

It is found in the mitochondrion. This chain is Small ribosomal subunit protein uS3m (MRPS24), found in Bos taurus (Bovine).